The sequence spans 185 residues: Ribosome-recycling factor (185 aa).

This sequence belongs to the RRF family.

It localises to the cytoplasm. In terms of biological role, responsible for the release of ribosomes from messenger RNA at the termination of protein biosynthesis. May increase the efficiency of translation by recycling ribosomes from one round of translation to another. The chain is Ribosome-recycling factor from Pseudomonas syringae pv. tomato (strain ATCC BAA-871 / DC3000).